Here is an 84-residue protein sequence, read N- to C-terminus: Small ribosomal subunit protein uS17 (84 aa).

The protein belongs to the universal ribosomal protein uS17 family. In terms of assembly, part of the 30S ribosomal subunit.

Functionally, one of the primary rRNA binding proteins, it binds specifically to the 5'-end of 16S ribosomal RNA. The protein is Small ribosomal subunit protein uS17 of Aliivibrio fischeri (strain ATCC 700601 / ES114) (Vibrio fischeri).